The sequence spans 856 residues: Paladin (856 aa).

Over residues 1 to 16 the composition is skewed to low complexity; that stretch reads MGTTASTAQQTVSAGT. The disordered stretch occupies residues 1–29; sequence MGTTASTAQQTVSAGTPFEGLQGSGTMDS. Gly2 carries N-myristoyl glycine lipidation. Ser86 carries the post-translational modification Phosphoserine.

The protein belongs to the paladin family. In terms of tissue distribution, expressed in endothelial cells, and in certain larger vessels, in mural cells. In the brain, possibly expressed in microglia. Expressed in peripheral blood mononuclear cells (at protein level).

The protein resides in the cytoplasm. Its subcellular location is the cytosol. This chain is Paladin (PALD1), found in Homo sapiens (Human).